The following is an 811-amino-acid chain: Zinc finger CCCH domain-containing protein 11A (811 aa).

3 consecutive C3H1-type zinc fingers follow at residues 2–30 (PNQG…HCEA), 32–58 (LGNE…HMEI), and 61–87 (KRSE…HHNR). Phosphoserine is present on Ser109. Residues Lys115 and Lys125 each participate in a glycyl lysine isopeptide (Lys-Gly) (interchain with G-Cter in SUMO2) cross-link. A Phosphoserine modification is found at Ser133. 4 disordered regions span residues 140–195 (MKVE…GLRV), 224–258 (KKMK…KENV), 286–352 (GKRK…EKVN), and 368–434 (ERAS…TCIK). A Glycyl lysine isopeptide (Lys-Gly) (interchain with G-Cter in SUMO2) cross-link involves residue Lys141. 2 positions are modified to phosphoserine: Ser150 and Ser172. The span at 161-176 (ADDDEDDDDQFSEEGD) shows a compositional bias: acidic residues. Ser291 bears the Phosphoserine mark. Basic and acidic residues-rich tracts occupy residues 310–323 (KKVE…DKTP) and 368–391 (ERAS…KTDD). Residue Thr322 is modified to Phosphothreonine. Residues 363-424 (EEILLERASQ…KHRQQEAERQ (62 aa)) are a coiled coil. Position 371 is a phosphoserine (Ser371). Positions 392-403 (STSGARSSSTIR) are enriched in polar residues. Residues 418–434 (QQEAERQKSKKDTTCIK) are compositionally biased toward basic and acidic residues. Lys479 is covalently cross-linked (Glycyl lysine isopeptide (Lys-Gly) (interchain with G-Cter in SUMO2)). Residues 483 to 550 (ALRVQQSSES…KEASGETTGV (68 aa)) are disordered. Residues 487–499 (QQSSESSTSSPSQ) are compositionally biased toward low complexity. Residue Lys620 forms a Glycyl lysine isopeptide (Lys-Gly) (interchain with G-Cter in SUMO2) linkage. Positions 716–769 (TVPEAENPRDSLVLPPTQSSSDSSPPEVSGPSSSQMSMKTRRLSSASTGKPQLS) are disordered. Positions 730 to 749 (PPTQSSSDSSPPEVSGPSSS) are enriched in low complexity. Over residues 750–766 (QMSMKTRRLSSASTGKP) the composition is skewed to polar residues.

Interacts with TREX complex components THOC2, DDX39 and POLDIP3; the interactions are ATP-dependent. Interacts with PABPN1; this interaction retains ZC3H11A in nuclear speckles. Interacts with KPNA3.

It is found in the nucleus speckle. Its function is as follows. Through its association with TREX complex components, may participate in the export and post-transcriptional coordination of selected mRNA transcripts, including those required to maintain the metabolic processes in embryonic cells. Binds RNA. The sequence is that of Zinc finger CCCH domain-containing protein 11A (ZC3H11A) from Pongo abelii (Sumatran orangutan).